Consider the following 74-residue polypeptide: Large ribosomal subunit protein bL31 (74 aa).

The protein belongs to the bacterial ribosomal protein bL31 family. Type A subfamily. As to quaternary structure, part of the 50S ribosomal subunit.

In terms of biological role, binds the 23S rRNA. This chain is Large ribosomal subunit protein bL31, found in Xanthobacter autotrophicus (strain ATCC BAA-1158 / Py2).